Here is a 1130-residue protein sequence, read N- to C-terminus: Transmembrane channel-like protein 3 (1130 aa).

Over 1–148 the chain is Cytoplasmic; that stretch reads MKTSKASQRY…ASYFIFLRWL (148 aa). The chain crosses the membrane as a helical span at residues 149–169; sequence FGINIVLTVMTGAFVVLPELI. Topologically, residues 170–192 are extracellular; the sequence is AGQPFGSTASKTIPREQITSAQD. Residues 193 to 213 traverse the membrane as a helical segment; that stretch reads LDTVWSLGGYLQYSVLFYGYY. The Cytoplasmic portion of the chain corresponds to 214–225; it reads GRERRIGRAGYR. The chain crosses the membrane as a helical span at residues 226 to 246; the sequence is LPLAYFLVGMAVFAYSFIVLL. Residues 247 to 319 lie on the Extracellular side of the membrane; that stretch reads KRMAKNSRTS…KNMAVTVCLR (73 aa). N-linked (GlcNAc...) asparagine glycosylation occurs at N264. Residues 320–340 form a helical membrane-spanning segment; it reads IIANILVLLSLAGSIYLIYFV. The Cytoplasmic portion of the chain corresponds to 341 to 361; that stretch reads VDRSQKLEQSKKELTLWEKNE. The helical transmembrane segment at 362-382 threads the bilayer; the sequence is VSVVVSLVTMLAPSAFDLIAA. At 383-393 the chain is on the extracellular side; that stretch reads LEMYHPRTTLR. Residues 394 to 414 form a helical membrane-spanning segment; the sequence is FQLARVLVLYLGNLYSLIIAL. Over 415–509 the chain is Cytoplasmic; that stretch reads LDKVNSMNIE…CWETYVGQEM (95 aa). A helical transmembrane segment spans residues 510-530; that stretch reads LKLSVIDMLFTVASILLIDFF. Topologically, residues 531–570 are extracellular; it reads RGLFVRYLSDYWCWDLESKFPEYGEFKIAENVLHLVYNQG. A helical membrane pass occupies residues 571-591; sequence MIWMGAFFSPCLPAFNVLKLI. Residues 592–619 lie on the Cytoplasmic side of the membrane; the sequence is GLMYLRSWAVLTCNVPHQQVFRASRSNN. Residues 620-640 form a helical membrane-spanning segment; that stretch reads FYLAMLLFMLFLCMLPTIFAI. The Extracellular segment spans residues 641-680; that stretch reads VHYKPSLNCGPFSGQEKIYDIVSETIENDFPTWFHAVVGH. A helical membrane pass occupies residues 681 to 701; sequence ISSPVVILPAVLLLFMLIYYL. The Cytoplasmic segment spans residues 702-1130; the sequence is QSIARSLKLS…DLNDLICSNV (429 aa). Disordered regions lie at residues 742–774, 819–893, 999–1019, 1033–1059, and 1097–1116; these read DARQ…EESS, RSLP…FQPI, SSCF…KYQR, QLER…LKAR, and QGRF…KSRQ. Residues 747–767 show a composition bias toward polar residues; it reads GSATEAESSENSKPKTLQARI. A compositionally biased stretch (basic and acidic residues) spans 840–850; sequence SRSRPEQDTNR. The segment covering 856–876 has biased composition (polar residues); that stretch reads CSSTSNLHKNRSCSSVTQTQP. Basic and acidic residues-rich tracts occupy residues 878-890 and 1006-1017; these read KDVR…RKDF and DRSENNTRDPKY. The span at 1097 to 1106 shows a compositional bias: polar residues; sequence QGRFPRSASQ.

It belongs to the TMC family. As to expression, detected in most neuronal organs and also in some non-neuronal tissues.

It is found in the membrane. Its function is as follows. Probable component of an ion channel. Molecular function hasn't been characterized yet. This is Transmembrane channel-like protein 3 from Mus musculus (Mouse).